A 313-amino-acid polypeptide reads, in one-letter code: 2-oxoglutarate-dependent dioxygenase eupC (313 aa).

Residues 187–284 (PSIPMRFLHY…LNAKALDGSG (98 aa)) form the Fe2OG dioxygenase domain. Residues histidine 212, aspartate 214, and histidine 263 each coordinate Fe cation. A 2-oxoglutarate-binding site is contributed by lysine 274.

It belongs to the iron/ascorbate-dependent oxidoreductase family. Requires Fe(2+) as cofactor.

The protein operates within secondary metabolite biosynthesis; terpenoid biosynthesis. 2-oxoglutarate-dependent dioxygenase; part of the gene cluster that mediates the biosynthesis of eupenifeldin, a bistropolone meroterpenoid that acts as an antitumor agent. The first step of eupenifeldin biosynthesis is the biosynthesis of 3-methylorcinaldehyde performed by the non-reducing polyketide synthase eupA. Oxidative dearomatization of 3-methylorcinaldehyde likely catalyzed by the FAD-dependent monooxygenase eupB is followed by oxidative ring expansion by the 2-oxoglutarate-dependent dioxygenase eupC to provide the first tropolone metabolite, tropolone stipitaldehyde. In parallel, generation of sesquiterpene alpha-humulene from farnesylpyrophosphate (FPP) is catalyzed by the terpene cyclase eupE. The cytochrome P450 monooxygenase eupD then hydroxylates humulene to humulenol. The putative Diels-Alderase eupF probably catalyzes the formation of the tropolone-humulene skeleton by linking humulenol and the polyketide moiety. The short-chain dehydrogenase/reductase eupG and the flavin-dependent monooxygenase eupH are also essential for eupenifeldin biosynthesis and are likely the additional decorating enzymes of the tropolone-humulene skeleton to produce final eupenifeldin or derivatives. The polypeptide is 2-oxoglutarate-dependent dioxygenase eupC (Phoma sp).